We begin with the raw amino-acid sequence, 319 residues long: Transaldolase (319 aa).

The Schiff-base intermediate with substrate role is filled by K131.

Belongs to the transaldolase family. Type 1 subfamily. Homodimer.

Its subcellular location is the cytoplasm. It catalyses the reaction D-sedoheptulose 7-phosphate + D-glyceraldehyde 3-phosphate = D-erythrose 4-phosphate + beta-D-fructose 6-phosphate. It participates in carbohydrate degradation; pentose phosphate pathway; D-glyceraldehyde 3-phosphate and beta-D-fructose 6-phosphate from D-ribose 5-phosphate and D-xylulose 5-phosphate (non-oxidative stage): step 2/3. Transaldolase is important for the balance of metabolites in the pentose-phosphate pathway. The protein is Transaldolase of Wigglesworthia glossinidia brevipalpis.